The sequence spans 244 residues: Probable 2-phosphosulfolactate phosphatase (244 aa).

Belongs to the ComB family. It depends on Mg(2+) as a cofactor.

The enzyme catalyses (2R)-O-phospho-3-sulfolactate + H2O = (2R)-3-sulfolactate + phosphate. This chain is Probable 2-phosphosulfolactate phosphatase, found in Thermosynechococcus vestitus (strain NIES-2133 / IAM M-273 / BP-1).